The following is a 381-amino-acid chain: MRFQSIMMLTITCAGTCLAEGLAPSDQAYRPTMTGLKSRLNDPRPLSTATIATSSERFLRFDTVARDTAGNDEERVGPSWLAKVDGLMHKMVTSSLSAEEAQLKVWIQSQIHPRELFGVLSLGKRAAKLDDNPDFVQWLRLVKDFRANNGNQAFSDLDIYYLLLKTNSPEQLKLLFETLRHTPGMTKIGASMEKSLSGNWIRKALEQDTYPTIVYNTLRLKDAGTKLDDTPMFRQWLEYVEKYWNKNAGAFFGDTQMLTLFQKTMTEEEDIIKLVHMLRNNPGMKSHADKLERYLLLTSESSHKTMADVWLKARETPEEVFRILRLAEKQTAAADDNRMLNLWLRYTQTYRDKIDKNAFSDAEALQFFRKAKPLDFDWEIV.

The N-terminal stretch at methionine 1–alanine 19 is a signal peptide. Residues arginine 57–arginine 75 carry the RxLR-dEER motif. WY-domain stretches follow at residues serine 97–glycine 150, asparagine 151–glycine 198, asparagine 199–asparagine 247, phenylalanine 251–serine 299, and serine 302–isoleucine 354. The ATG8 interacting motif signature appears at lysine 372–valine 381.

The protein belongs to the RxLR effector family. In terms of assembly, interacts via its C-terminal AIM with host ATG8CL.

Its subcellular location is the secreted. It localises to the host nucleus. The protein resides in the host cytoplasm. In terms of biological role, effector that specifically binds host autophagy protein ATG8CL of the ATG8 family to stimulate autophagosome formation and subsequent autophagy rather than blocking autophagic flux. The pathogen remodels host-microbe interface by co-opting the host autophagy machinery which plays a key role in plant immunity. PexRD54 competes with the autophagy cargo receptor Joka2 to deplete it out of ATG8CL complexes and interferes with Joka2's positive effect on pathogen defense. This chain is RxLR effector protein 54, found in Phytophthora infestans (strain T30-4) (Potato late blight agent).